Consider the following 255-residue polypeptide: 1-(5-phosphoribosyl)-5-[(5-phosphoribosylamino)methylideneamino] imidazole-4-carboxamide isomerase (255 aa).

Asp-8 acts as the Proton acceptor in catalysis. Asp-129 acts as the Proton donor in catalysis.

Belongs to the HisA/HisF family.

The protein resides in the cytoplasm. The enzyme catalyses 1-(5-phospho-beta-D-ribosyl)-5-[(5-phospho-beta-D-ribosylamino)methylideneamino]imidazole-4-carboxamide = 5-[(5-phospho-1-deoxy-D-ribulos-1-ylimino)methylamino]-1-(5-phospho-beta-D-ribosyl)imidazole-4-carboxamide. It functions in the pathway amino-acid biosynthesis; L-histidine biosynthesis; L-histidine from 5-phospho-alpha-D-ribose 1-diphosphate: step 4/9. The sequence is that of 1-(5-phosphoribosyl)-5-[(5-phosphoribosylamino)methylideneamino] imidazole-4-carboxamide isomerase from Synechococcus sp. (strain CC9902).